A 485-amino-acid polypeptide reads, in one-letter code: MFS-type transporter phm3 (485 aa).

A disordered region spans residues M1–T22. 12 consecutive transmembrane segments (helical) span residues F55 to A75, I83 to L103, L113 to S133, F144 to L164, A175 to V195, W203 to M223, P278 to F298, G317 to L337, L357 to S377, W384 to P404, A421 to P441, and L449 to V469.

The protein belongs to the major facilitator superfamily.

The protein localises to the cell membrane. Its function is as follows. MFS-type transporter; part of the gene cluster that mediates the biosynthesis of the trans-fused decalin-containing tetramic acid phomasetin. This Pyrenochaetopsis sp protein is MFS-type transporter phm3.